Reading from the N-terminus, the 812-residue chain is MKKYVTTKSVQPVAFRLTTLSLVMSAVLGSASVIAGEKLDMSFIQGGGGVNPEVWAALNGSYAPGRYLVDLSLNGKEAGKQILDVTPQDSNELCLTEAWLTKAGVYVSADYFREGYDATRQCYVLTKAPSVKVDFDVSTQSLALSIPQKGLVKMPENVDWDYGTSAFRVNYNANANTGRNNTSAFGSADLKANIGHWVVSSSATASGGDSGDNSTTINMFTATRAIRALSADLAVGKTSTGDSLLGSTGTYGVSLSRNNSMKPGNLGYTPVFSGIANGPSRVTLTQNGRLLHSEMVPAGPFSITDVPLYTSGDVTMKITGEDGRDEVQNFPLSVMAGQLSPGQHEFSVAAGLPDDDSDLKGGVFAASYGYGLDGLTLRAGGVFNQDWQGASAGVVAGLGYLGAVSADGAYATAKYRDGSHSGNKVQLSWSKQLETTNTGLRVSWSRQSEEYEGMSSFDPTELWSQSNHGRRTKDEWNAGISQPVGGLFSLSVSGWQRSYYPASMTGSYRYSDDNGKETGITGSLSTQIKGVSLNLGWSGSRNSRGENNWSASASVSVPFTLFDRRYSSSASVSTSKGGGTGFSTGVSGSLNDRFSYGLGGGRDGDGGTSSYLNASYSGDRAYLNGVLNHSQSGGTSGSVSVSGSVLAVPAAKDIMFSRTTGDTVAVVNVKDTPGVKVTSGDGQTDSDGNLVVPLNSYDWNTVTIDTGTLPLSTELTNTSQKVVPTDKAVVWMPFDALKVKRYLLQVKQRDGEFVPGGTWARDSKNTPLGFVANNGVLMINTVDAPGDITLGQCRIPAARLQDTEKLQEITCE.

The first 35 residues, 1–35 (MKKYVTTKSVQPVAFRLTTLSLVMSAVLGSASVIA), serve as a signal peptide directing secretion. Cysteine 793 and cysteine 811 are disulfide-bonded.

The protein belongs to the fimbrial export usher family.

The protein localises to the cell outer membrane. Its function is as follows. Involved in the export and assembly of K88ab fimbrial subunits across the outer membrane. This chain is Outer membrane usher protein FaeD (faeD), found in Escherichia coli.